Reading from the N-terminus, the 247-residue chain is Phosphate import ATP-binding protein PstB (247 aa).

Residues Cys-2–Ile-242 form the ABC transporter domain. Residue Gly-32–Ser-39 participates in ATP binding.

The protein belongs to the ABC transporter superfamily. Phosphate importer (TC 3.A.1.7) family. The complex is composed of two ATP-binding proteins (PstB), two transmembrane proteins (PstC and PstA) and a solute-binding protein (PstS).

The protein localises to the cell inner membrane. The enzyme catalyses phosphate(out) + ATP + H2O = ADP + 2 phosphate(in) + H(+). Part of the ABC transporter complex PstSACB involved in phosphate import. Responsible for energy coupling to the transport system. The polypeptide is Phosphate import ATP-binding protein PstB (Methylococcus capsulatus (strain ATCC 33009 / NCIMB 11132 / Bath)).